We begin with the raw amino-acid sequence, 83 residues long: Small ribosomal subunit protein eS21 (83 aa).

N-acetylmethionine is present on M1. A Glycyl lysine isopeptide (Lys-Gly) (interchain with G-Cter in SUMO2) cross-link involves residue K41. K81 is subject to N6-acetyllysine.

It belongs to the eukaryotic ribosomal protein eS21 family. As to quaternary structure, component of the 40S small ribosomal subunit.

It localises to the cytoplasm. Its subcellular location is the cytosol. The protein resides in the rough endoplasmic reticulum. Component of the small ribosomal subunit. The ribosome is a large ribonucleoprotein complex responsible for the synthesis of proteins in the cell. This Sus scrofa (Pig) protein is Small ribosomal subunit protein eS21 (RPS21).